Reading from the N-terminus, the 200-residue chain is Rho GDP-dissociation inhibitor 2 (200 aa).

The disordered stretch occupies residues 1–39 (MTEKDAQPQLEEADDDLDSKLNYKPPPQKSLKELQEMDK). N-acetylthreonine is present on Thr2. At Lys20 the chain carries N6-acetyllysine. Residue Tyr23 is modified to Phosphotyrosine. N6-acetyllysine is present on residues Lys24, Lys39, Lys46, Lys101, and Lys123. Basic and acidic residues predominate over residues 30-39 (SLKELQEMDK). Ser144 is modified (phosphoserine). Lys174 is subject to N6-acetyllysine.

The protein belongs to the Rho GDI family. Interacts with RHOA. Interacts with RAC1. Interacts with RAC2. Interacts with CDC42. In terms of tissue distribution, preferentially expressed in hematopoietic cells.

The protein localises to the cytoplasm. It localises to the cytosol. Its function is as follows. Regulates the GDP/GTP exchange reaction of the Rho proteins by inhibiting the dissociation of GDP from them, and the subsequent binding of GTP to them. Regulates reorganization of the actin cytoskeleton mediated by Rho family members. The protein is Rho GDP-dissociation inhibitor 2 (Arhgdib) of Mus musculus (Mouse).